A 154-amino-acid polypeptide reads, in one-letter code: MKTFSAKPAEVTKKWVVIDATGLVVGRLATLVAMRLRGKHLPTYTPHVDCGDNIIIINAAKVVLTGRKRDNKVYYHHTGFIGGIKERTAKSILEGRFPERVVEKAVERMIPRGPLGRVQMGNLRVYPGAEHPHEAQQPETLDVGAMNRKNKRAA.

The segment at 132 to 154 is disordered; sequence PHEAQQPETLDVGAMNRKNKRAA.

This sequence belongs to the universal ribosomal protein uL13 family. Part of the 50S ribosomal subunit.

Its function is as follows. This protein is one of the early assembly proteins of the 50S ribosomal subunit, although it is not seen to bind rRNA by itself. It is important during the early stages of 50S assembly. This Rhodopseudomonas palustris (strain HaA2) protein is Large ribosomal subunit protein uL13.